The primary structure comprises 424 residues: S-phase kinase-associated protein 2 (424 aa).

Residues 1-220 (MHRKHLQEIP…LSLEGLRLSD (220 aa)) form a mediates interaction with hepatitis C virus non-structural protein NS5A region. Positions 39-73 (SALEKEEPDSENIPQELLSNLGHPESPPRKRLKSK) are disordered. Phosphoserine is present on S64. A Nuclear localization signal motif is present at residues 67-73 (RKRLKSK). N6-acetyllysine; by p300/EP300 occurs at positions 68 and 71. Phosphoserine is present on residues S72 and S75. Residues 94-140 (GVSWDSLPDELLLGIFSCLCLPELLKVSGVCKRWYRLASDESLWQTL) form the F-box domain. LRR repeat units follow at residues 151–176 (VTGRLLSQGVIAFRCPRSFMDQPLAE), 177–204 (HFSPFRVQHMDLSNSVIEVSTLHGILSQ), 210–234 (NLSLEGLRLSDPIVNTLAKNSNLVR), 235–257 (LNLSGCSGFSEFALQTLLSSCSR), 258–284 (LDELNLSWCFDFTEKHVQVAVAHVSET), 286–308 (TQLNLSGYRKNLQKSDLSTLVRR), 309–330 (CPNLVHLDLSDSVMLKNDCFQE), 334–356 (LNYLQHLSLSRCYDIIPETLLEL), 359–378 (IPTLKTLQVFGIVPDGTLQL), and 380–401 (KEALPHLQINCSHFTTIARPTI). The residue at position 179 (S179) is a Phosphoserine. Positions 402–424 (GNKKNQEIWGIKCRLTLQKPSCL) are mediates interaction with IFI27.

As to quaternary structure, part of a SCF(SKP2) complex consisting of CUL1, RBX1, SKP1 and SKP2. Component of a SCF(SKP2)-like complex containing CUL1, SKP1, TRIM21 and SKP2. Interacts directly with CUL1 and SKP1. Interacts with CKS1. Interacts with ASB2 which is the substrate-recognition component of a probable ECS E3 ubiquitin-protein ligase complex; ASB2 is likely to bridge the formation of dimeric E3-ubiquitin-protein ligase complexes composed of an ECS complex and an SCF(SKP2) complex. Interacts with the cyclin-A-CDK2 complex. Interacts with ORC1, phosphorylated CDT1, phosphorylated RBL2, ELF4, phosphorylated RAG2, FOXO1, UBP43, MYC, TOB1, TAL1 and KMT2A/MLL1. Interacts with TRIM21. Interacts with cyclin-E. Interacts with IFI27; promotes the ubiquitin-mediated proteasomal degradation of hepatitis C virus/HCV non-structural protein NS5A. Interacts with CARM1. In terms of assembly, (Microbial infection) Interacts with hepatitis C virus/HCV non-structural protein NS5A; promotes the ubiquitin-mediated proteasomal degradation of NS5A. Phosphorylated on serine and threonine resudues in response to DNA damage, promoting 'Lys-63'-linked ubiquitination of NBN. In terms of processing, ubiquitinated by the APC/C complex, leading to its degradation by the proteasome. Deubiquitinated by USP13. Post-translationally, acetylation at Lys-68 and Lys-71 increases stability through impairment of APC/C-mediated proteolysis and promotes cytoplasmic retention. Deacetylated by SIRT3.

The protein resides in the cytoplasm. It is found in the nucleus. It functions in the pathway protein modification; protein ubiquitination. In terms of biological role, substrate recognition component of a SCF (SKP1-CUL1-F-box protein) E3 ubiquitin-protein ligase complex which mediates the ubiquitination and subsequent proteasomal degradation of target proteins involved in cell cycle progression, signal transduction and transcription. Specifically recognizes phosphorylated CDKN1B/p27kip and is involved in regulation of G1/S transition. Degradation of CDKN1B/p27kip also requires CKS1. Recognizes target proteins ORC1, CDT1, RBL2, KMT2A/MLL1, CDK9, RAG2, NBN, FOXO1, UBP43, YTHDF2, and probably MYC, TOB1 and TAL1. Degradation of TAL1 also requires STUB1. Recognizes CDKN1A in association with CCNE1 or CCNE2 and CDK2. Promotes ubiquitination and destruction of CDH1 in a CK1-dependent manner, thereby regulating cell migration. Following phosphorylation in response to DNA damage, mediates 'Lys-63'-linked ubiquitination of NBN, promoting ATM recruitment to DNA damage sites and DNA repair via homologous recombination. Its function is as follows. Through the ubiquitin-mediated proteasomal degradation of hepatitis C virus non-structural protein 5A, has an antiviral activity towards that virus. The sequence is that of S-phase kinase-associated protein 2 (SKP2) from Homo sapiens (Human).